A 107-amino-acid polypeptide reads, in one-letter code: uncharacterized protein (107 aa).

The chain crosses the membrane as a helical span at residues Ile-12–Gly-32.

It is found in the membrane. This is an uncharacterized protein from Rickettsia prowazekii (strain Madrid E).